A 147-amino-acid chain; its full sequence is UPF0735 ACT domain-containing protein BPUM_2431 (147 aa).

Positions 70–145 (TLFFHLEDRS…FVEKVEILGS (76 aa)) constitute an ACT domain.

Belongs to the UPF0735 family.

In Bacillus pumilus (strain SAFR-032), this protein is UPF0735 ACT domain-containing protein BPUM_2431.